Consider the following 715-residue polypeptide: Polyribonucleotide nucleotidyltransferase (715 aa).

The Mg(2+) site is built by D495 and D501. In terms of domain architecture, KH spans 562 to 621; the sequence is PRLLTLQIPPDMIGLVIGPGGKTVRGISEQYNVKVDISEEGLVTITAPNETNAKQARAAI. Residues 631-699 form the S1 motif domain; it reads GDVYLGRVTR…SKGRINLTRL (69 aa).

This sequence belongs to the polyribonucleotide nucleotidyltransferase family. Mg(2+) serves as cofactor.

It is found in the cytoplasm. It carries out the reaction RNA(n+1) + phosphate = RNA(n) + a ribonucleoside 5'-diphosphate. In terms of biological role, involved in mRNA degradation. Catalyzes the phosphorolysis of single-stranded polyribonucleotides processively in the 3'- to 5'-direction. In Thermosynechococcus vestitus (strain NIES-2133 / IAM M-273 / BP-1), this protein is Polyribonucleotide nucleotidyltransferase.